A 145-amino-acid polypeptide reads, in one-letter code: Large ribosomal subunit protein uL16 (145 aa).

The protein belongs to the universal ribosomal protein uL16 family. As to quaternary structure, part of the 50S ribosomal subunit.

Its function is as follows. Binds 23S rRNA and is also seen to make contacts with the A and possibly P site tRNAs. This Desulfitobacterium hafniense (strain DSM 10664 / DCB-2) protein is Large ribosomal subunit protein uL16.